We begin with the raw amino-acid sequence, 423 residues long: 3-phosphoshikimate 1-carboxyvinyltransferase (423 aa).

The 3-phosphoshikimate site is built by K21, S22, and R26. K21 contacts phosphoenolpyruvate. G92 and R120 together coordinate phosphoenolpyruvate. S164, Q166, D312, and K339 together coordinate 3-phosphoshikimate. Q166 contacts phosphoenolpyruvate. The active-site Proton acceptor is D312. The phosphoenolpyruvate site is built by R343 and R385.

It belongs to the EPSP synthase family. As to quaternary structure, monomer.

It is found in the cytoplasm. It catalyses the reaction 3-phosphoshikimate + phosphoenolpyruvate = 5-O-(1-carboxyvinyl)-3-phosphoshikimate + phosphate. Its pathway is metabolic intermediate biosynthesis; chorismate biosynthesis; chorismate from D-erythrose 4-phosphate and phosphoenolpyruvate: step 6/7. In terms of biological role, catalyzes the transfer of the enolpyruvyl moiety of phosphoenolpyruvate (PEP) to the 5-hydroxyl of shikimate-3-phosphate (S3P) to produce enolpyruvyl shikimate-3-phosphate and inorganic phosphate. This chain is 3-phosphoshikimate 1-carboxyvinyltransferase, found in Thermoanaerobacter pseudethanolicus (strain ATCC 33223 / 39E) (Clostridium thermohydrosulfuricum).